We begin with the raw amino-acid sequence, 523 residues long: 2-isopropylmalate synthase (523 aa).

The Pyruvate carboxyltransferase domain occupies 5 to 267 (VIIFDTTLRD…HTNINHHEIW (263 aa)). Positions 14, 202, 204, and 238 each coordinate Mn(2+). The interval 392-523 (RLDYFSVQSG…HNKENNKEIV (132 aa)) is regulatory domain.

It belongs to the alpha-IPM synthase/homocitrate synthase family. LeuA type 1 subfamily. In terms of assembly, homodimer. Mn(2+) serves as cofactor.

It localises to the cytoplasm. The catalysed reaction is 3-methyl-2-oxobutanoate + acetyl-CoA + H2O = (2S)-2-isopropylmalate + CoA + H(+). The protein operates within amino-acid biosynthesis; L-leucine biosynthesis; L-leucine from 3-methyl-2-oxobutanoate: step 1/4. In terms of biological role, catalyzes the condensation of the acetyl group of acetyl-CoA with 3-methyl-2-oxobutanoate (2-ketoisovalerate) to form 3-carboxy-3-hydroxy-4-methylpentanoate (2-isopropylmalate). The polypeptide is 2-isopropylmalate synthase (Salmonella arizonae (strain ATCC BAA-731 / CDC346-86 / RSK2980)).